Reading from the N-terminus, the 686-residue chain is DNA ligase (686 aa).

NAD(+)-binding positions include 34–38 (DAEYD), 83–84 (SI), and Glu120. The active-site N6-AMP-lysine intermediate is the Lys122. Residues Arg143, Glu180, Lys298, and Lys322 each contribute to the NAD(+) site. Cys420, Cys423, Cys438, and Cys444 together coordinate Zn(2+). One can recognise a BRCT domain in the interval 603-686 (QSGGILSGKT…ALLGSNKKNG (84 aa)).

This sequence belongs to the NAD-dependent DNA ligase family. LigA subfamily. It depends on Mg(2+) as a cofactor. The cofactor is Mn(2+).

The catalysed reaction is NAD(+) + (deoxyribonucleotide)n-3'-hydroxyl + 5'-phospho-(deoxyribonucleotide)m = (deoxyribonucleotide)n+m + AMP + beta-nicotinamide D-nucleotide.. Functionally, DNA ligase that catalyzes the formation of phosphodiester linkages between 5'-phosphoryl and 3'-hydroxyl groups in double-stranded DNA using NAD as a coenzyme and as the energy source for the reaction. It is essential for DNA replication and repair of damaged DNA. This is DNA ligase from Thiobacillus denitrificans (strain ATCC 25259 / T1).